The primary structure comprises 511 residues: LEM domain-containing protein 2 (511 aa).

A2 carries the N-acetylalanine modification. Residues 2-42 (AGLSDLELRRELQALGFQPGPITDTTRNVYRNKLRRLRGEA) enclose the LEM domain. Disordered regions lie at residues 18–110 (FQPG…SDAS) and 128–206 (GLSY…AGRT). Residues 38–80 (LRGEARLRDDERLREDAGPREDAGPRGPERQREEARLREEAPL) are compositionally biased toward basic and acidic residues. Residues 80–112 (LRARPAASVLRSEPWPLSPSPPAPSAASDASGP) form an interaction with lamin A/C complexes region. A required for nuclear retention and interaction with LMNA isoform C region spans residues 80–141 (LRARPAASVL…PPHAGPGPLR (62 aa)). Low complexity-rich tracts occupy residues 81-94 (RARPAASVLRSEPW) and 172-183 (APPSASARPHSA). Transmembrane regions (helical) follow at residues 221–241 (LLLWASLGLLLGFLAILWVKM) and 385–405 (VTHVLIFFWCLAFLWGLLILL). The winged-Helix (WH) stretch occupies residues 403 to 511 (ILLKYRWRKL…KPSSFSDSER (109 aa)). A phosphoserine mark is found at S505, S507, and S509.

As to quaternary structure, interacts (via N-terminus) with LMNA isoform C (via C-terminus) (in vitro). Interacts (via LEM domain) with BANF1. Interacts (via C-terminus) with CHMP7. Interacts (via N-terminus) with tubulin; the interaction causes microtubule bundling and stabilization (in vitro). Phosphorylated; strongly phosphorylated in mitosis compared to G1/S. In terms of tissue distribution, ubiquitously expressed, including liver, brain, heart, skeletal muscle, lung, testis, spleen, kidney and white adipose tissue.

It is found in the nucleus inner membrane. It localises to the nucleus envelope. The protein resides in the cytoplasm. The protein localises to the cytoskeleton. Its subcellular location is the spindle. Functionally, nuclear lamina-associated inner nuclear membrane protein that is involved in nuclear structure organization and maintenance of nuclear envelope (NE) integrity and NE reformation after mitosis. Plays a role as transmembrane adapter for the endosomal sorting complexes required for transport (ESCRT), and is thereby involved in ESCRT-mediated NE reformation. Promotes ESCRT-mediated NE closure by recruiting CHMP7 and downstream ESCRT-III proteins IST1/CHMP8 and CHMP2A to the reforming NE during anaphase. During nuclear reassembly, condenses into a liquid-like coating around microtubule spindles and coassembles with CHMP7 to form a macromolecular O-ring seal at the confluence between membranes, chromatin, and the spindle to facilitate early nuclear sealing. Plays a role in the organization of heterochromatin associated with the NE and in the maintenance of NE organization under mechanical stress. Required for embryonic development and is involved in regulation of several signaling pathways such as MAPK and AKT. Required for myoblast differentiation involving regulation of ERK signaling. Essential for cardiac homeostasis and proper heart function. This chain is LEM domain-containing protein 2 (Lemd2), found in Mus musculus (Mouse).